The following is a 481-amino-acid chain: Leukocyte immunoglobulin-like receptor subfamily A member 6 (481 aa).

Positions 1–23 (MTPALTALLCLGLSLGPRTHVQA) are cleaved as a signal peptide. The Ig-like C2-type 1 domain maps to 24–118 (GPLPKPTLWA…PSDPLELVVT (95 aa)). Residues 24–447 (GPLPKPTLWA…SHAKDYTVEN (424 aa)) lie on the Extracellular side of the membrane. Cys49 and Cys98 form a disulfide bridge. Residue Asn139 is glycosylated (N-linked (GlcNAc...) asparagine). 2 disulfides stabilise this stretch: Cys144–Cys196 and Cys245–Cys296. Ig-like C2-type domains lie at 225–314 (PSLL…DPLN) and 323–408 (DRVS…HLLS). N-linked (GlcNAc...) asparagine glycosylation is found at Asn301 and Asn340. Cysteines 345 and 396 form a disulfide. The interval 418–439 (VSGPSGGPSLPPTGPPSTPASH) is disordered. Residues 426-435 (SLPPTGPPST) are compositionally biased toward pro residues. Residues 448–468 (LIRMGMAGLVLVVLGILLFEA) form a helical membrane-spanning segment. Topologically, residues 469–481 (QHSQRSPQDAARR) are cytoplasmic.

It localises to the membrane. May act as receptor for class I MHC antigens. In Pan troglodytes (Chimpanzee), this protein is Leukocyte immunoglobulin-like receptor subfamily A member 6 (LILRA6).